A 105-amino-acid chain; its full sequence is DNA-binding transcriptional regulator BolA (105 aa).

It belongs to the BolA/IbaG family.

Its function is as follows. Transcriptional regulator that plays an important role in general stress response. Has many effects on cell morphology, cell growth and cell division. Acts by regulating the transcription of many genes, including dacA (PBP-5), dacC (PBP-6), ampC and mreB. Probably involved in the coordination of genes that adapt the cell physiology in order to enhance cell adaptation and survival under stress conditions. Essential for normal cell morphology in stationary phase and under conditions of starvation. Also regulates a complex network of genes encoding proteins related to biofilm development, and negatively modulates flagellar biosynthesis and swimming capacity. Could be a motile/adhesive transcriptional switch, specifically involved in the transition between the planktonic and the attachment stage of biofilm formation. Overexpression produces round cell shape, impairs cell growth rate and induces biofilm development. This is DNA-binding transcriptional regulator BolA from Escherichia coli (strain K12).